The sequence spans 832 residues: Protein P (832 aa).

Residues Met-1 to Gln-177 are terminal protein domain (TP). The tract at residues Glu-178–Leu-335 is spacer. Composition is skewed to polar residues over residues Ser-205–Gln-220 and Ser-251–Ser-263. Residues Ser-205–Ser-263 form a disordered region. A polymerase/reverse transcriptase domain (RT) region spans residues Glu-336–Gln-679. In terms of domain architecture, Reverse transcriptase spans Lys-346–Ile-589. Mg(2+)-binding residues include Asp-418, Asp-540, and Asp-541.

The protein belongs to the hepadnaviridae P protein family.

The catalysed reaction is DNA(n) + a 2'-deoxyribonucleoside 5'-triphosphate = DNA(n+1) + diphosphate. It carries out the reaction Endonucleolytic cleavage to 5'-phosphomonoester.. With respect to regulation, activated by host HSP70 and HSP40 in vitro to be able to bind the epsilon loop of the pgRNA. Because deletion of the RNase H region renders the protein partly chaperone-independent, the chaperones may be needed indirectly to relieve occlusion of the RNA-binding site by this domain. Inhibited by several reverse-transcriptase inhibitors: Lamivudine, Adefovir and Entecavir. Its function is as follows. Multifunctional enzyme that converts the viral RNA genome into dsDNA in viral cytoplasmic capsids. This enzyme displays a DNA polymerase activity that can copy either DNA or RNA templates, and a ribonuclease H (RNase H) activity that cleaves the RNA strand of RNA-DNA heteroduplexes in a partially processive 3'- to 5'-endonucleasic mode. Neo-synthesized pregenomic RNA (pgRNA) are encapsidated together with the P protein, and reverse-transcribed inside the nucleocapsid. Initiation of reverse-transcription occurs first by binding the epsilon loop on the pgRNA genome, and is initiated by protein priming, thereby the 5'-end of (-)DNA is covalently linked to P protein. Partial (+)DNA is synthesized from the (-)DNA template and generates the relaxed circular DNA (RC-DNA) genome. After budding and infection, the RC-DNA migrates in the nucleus, and is converted into a plasmid-like covalently closed circular DNA (cccDNA). The activity of P protein does not seem to be necessary for cccDNA generation, and is presumably released from (+)DNA by host nuclear DNA repair machinery. This chain is Protein P, found in Gorilla gorilla (western gorilla).